The chain runs to 178 residues: Large ribosomal subunit protein uL6 (178 aa).

It belongs to the universal ribosomal protein uL6 family. In terms of assembly, part of the 50S ribosomal subunit.

Its function is as follows. This protein binds to the 23S rRNA, and is important in its secondary structure. It is located near the subunit interface in the base of the L7/L12 stalk, and near the tRNA binding site of the peptidyltransferase center. This is Large ribosomal subunit protein uL6 from Exiguobacterium sibiricum (strain DSM 17290 / CCUG 55495 / CIP 109462 / JCM 13490 / 255-15).